A 93-amino-acid polypeptide reads, in one-letter code: Ribonuclease P protein component 1 (93 aa).

It belongs to the eukaryotic/archaeal RNase P protein component 1 family. Consists of a catalytic RNA component and at least 4-5 protein subunits.

It is found in the cytoplasm. The catalysed reaction is Endonucleolytic cleavage of RNA, removing 5'-extranucleotides from tRNA precursor.. Its function is as follows. Part of ribonuclease P, a protein complex that generates mature tRNA molecules by cleaving their 5'-ends. The chain is Ribonuclease P protein component 1 from Methanothermobacter thermautotrophicus (strain ATCC 29096 / DSM 1053 / JCM 10044 / NBRC 100330 / Delta H) (Methanobacterium thermoautotrophicum).